Here is a 263-residue protein sequence, read N- to C-terminus: Proteasome subunit beta type-5 (263 aa).

A propeptide spans 1–59 (removed in mature form); sequence MALASVLERPLPVNQRGFFGLGGRADLLDLGPGSLSDGLSLAAPGWGVPEEPGIEMLHG. Thr-60 (nucleophile) is an active-site residue. Ala-108 is a binding site for bortezomib.

This sequence belongs to the peptidase T1B family. As to quaternary structure, the 26S proteasome consists of a 20S proteasome core and two 19S regulatory subunits. The 20S proteasome core is a barrel-shaped complex made of 28 subunits that are arranged in four stacked rings. The two outer rings are each formed by seven alpha subunits, and the two inner rings are formed by seven beta subunits. The proteolytic activity is exerted by three beta-subunits PSMB5, PSMB6 and PSMB7. Directly interacts with POMP. Interacts with ABCB1 and TAP1. (Microbial infection) Interacts with HIV-1 TAT protein.

Its subcellular location is the cytoplasm. The protein localises to the nucleus. The enzyme catalyses Cleavage of peptide bonds with very broad specificity.. Functionally, component of the 20S core proteasome complex involved in the proteolytic degradation of most intracellular proteins. This complex plays numerous essential roles within the cell by associating with different regulatory particles. Associated with two 19S regulatory particles, forms the 26S proteasome and thus participates in the ATP-dependent degradation of ubiquitinated proteins. The 26S proteasome plays a key role in the maintenance of protein homeostasis by removing misfolded or damaged proteins that could impair cellular functions, and by removing proteins whose functions are no longer required. Associated with the PA200 or PA28, the 20S proteasome mediates ubiquitin-independent protein degradation. This type of proteolysis is required in several pathways including spermatogenesis (20S-PA200 complex) or generation of a subset of MHC class I-presented antigenic peptides (20S-PA28 complex). Within the 20S core complex, PSMB5 displays a chymotrypsin-like activity. The chain is Proteasome subunit beta type-5 from Homo sapiens (Human).